A 530-amino-acid polypeptide reads, in one-letter code: TNF receptor-associated factor family protein DDB_G0272829 (530 aa).

The segment at 35–81 adopts an RING-type; degenerate zinc-finger fold; that stretch reads CQICEGLLISSLIPNRMKALQCINGHCFCLTCWESILEIKSECPTCR. 2 TRAF-type zinc fingers span residues 134 to 188 and 189 to 246; these read RHES…KQMQ and GHIL…NDND. Disordered stretches follow at residues 242–267, 391–432, and 483–530; these read NNDN…LSSS, TTTT…DNQG, and FNQL…GTSL. 3 stretches are compositionally biased toward low complexity: residues 253–267, 391–415, and 485–502; these read NNSN…LSSS, TTTT…NNNN, and QLSQ…SQSL. A coiled-coil region spans residues 361–422; it reads ILEHQQQQNQ…NNNNEDEEDD (62 aa). Residues 509 to 530 are compositionally biased toward polar residues; the sequence is ITINQNQNTPSNPFSIFSGTSL.

Belongs to the TNF receptor-associated factor family.

The protein localises to the cytoplasm. Probable adapter protein and signal transducer that links members of the tumor necrosis factor receptor family to different signaling pathways by association with the receptor cytoplasmic domain and kinases. This is TNF receptor-associated factor family protein DDB_G0272829 from Dictyostelium discoideum (Social amoeba).